A 57-amino-acid polypeptide reads, in one-letter code: Small ribosomal subunit protein eS27 (57 aa).

The Zn(2+) site is built by Cys-10, Cys-13, Cys-29, and Cys-32. The segment at 10 to 32 (CDDCENEQVLFGKAANTVNCAVC) adopts a C4-type zinc-finger fold.

This sequence belongs to the eukaryotic ribosomal protein eS27 family. In terms of assembly, part of the 30S ribosomal subunit. Requires Zn(2+) as cofactor.

The sequence is that of Small ribosomal subunit protein eS27 from Natronomonas pharaonis (strain ATCC 35678 / DSM 2160 / CIP 103997 / JCM 8858 / NBRC 14720 / NCIMB 2260 / Gabara) (Halobacterium pharaonis).